Here is a 1726-residue protein sequence, read N- to C-terminus: MKMEEMDLEEDVLDVVDQEASTIVDILCEQRDNVLQRIFALVDARTREQLQHLPNNRESISGLVDYFRTSDQHTCRRFLDIIWSFCENIPLELDIRIVNLAGSTAGALVNNSHVPDTENSPQSRYGKRARLDQVQSYTNAVKSFLQKKFEKVTKDIKKEVCLNNTWLCWRTQKYARVRDRPAKSQEGEEVSLEHKESVEALLMKTGRVVMLSGQAGSGKTLLMHCLAHHWAQGSYPSIELLFLLEFRQLNLISQPLSLKELLFRFFLPSDEDDEQSEAVLNYVLSNPEKICFIFDGYDEFGARFKDPKELECSVNPYQQLPLADLLSALCSAKILPGCTVLVTCRPRDVFDLFGSSDYFVAELLGFNQQRVKEYTQEYFQEKGCEIKERAVSLLMDSHHLLSMSHVPGLCHVCCVCLDHFLTSDMSQQPGTQLPTSLTQIYLHILSAFISRCHGCGSSDNHTPLLQRYRVQIAMLSKLAMDGLENSRIVFPANELTTELMNFGANAGILSRLDLTCGDGSRRLGCAFTHLTIQEFMAALHLMTNPDITESQLKKKLNLKSRWTAKTDPKTVFTDSLHLYMCGLAAEACTSNLVLLKGSENARAIVLKRQDAVLKTLQRFVVSGRQTGPKIIELCRCAHETQNIDLARAIGPRDRFELRNIRLNPVDIDALAFVISSANQMVCLDFGACYIEPECLNIIPNCKNLEELNFRSRKYDDKFAEALSGILPKLQSLKQLHFISGGLTNIGAAKLFKASECCPQITRLNVSDNYLTDESVKKITELFPKLAKLTSVILGKNNISINGIFILAGKMAAFPNIKEVYANAKKKEINVQFSANTTNSASTDDLNNTEESKQLILNDWNLKWTNVHNLCPMLRGCSSLTVLNLSHNALGNRGLKKLLEHLPTLDTIQEINVSDNGVDMDGVVLLSPLLCTLKDLTEVEASHNGKKMLVLTFSSSIIDALKQVTSEGCDILHKKLSLTHSDIHPTDMNKLCKNLIKCPNPLNLDFSHGTLKDESTEKLLKFLPNMASLNLLNLSHIQMSTDSALLLVQLLSDCQRTTTVELRQLGETFIKFLQDKSEAATCKFNQYRLSSANLAKLCEILEHCHHLTDLDLSSNFLKDEDVKTFVQFLPKLQISGSVSLNNNNLTEVGVLYLLSLMHTCERVAAVEVSLGKEEQQDIIGFVQKNCTGKTFRLSSCTVQSQNVLFLLNKLATLNSVQTLELRNNSFSADTIKYLITEFCGDCNHRTIRIMEPWIKGEAAVGLVQCCLELNPNIKEIRVEKTCLKLSVESLVSATIPNEWENGNCSLSAVHCISFDDCEVEGQHLSSLQSALRNCPSLQELHFSQLTMGADGAEFLSSVLPSLKNLKILSLSSKGETEDEAVIFALQHAQKHLEQLSLAHHVIKDRGAAVLGNALQGFTRMRSLSLLKCLDWTATGGRDLVRGLVQCHSLEEIRLDSIELDEESIDCFAQGLQAMTSLKKISLNKTISKEGSGVLCLLASLHPLIELEEIELIGLRMGDRGVEELVKHIPKWTRLRKINLSENRVSDHAGEMLVKALSHCRALQQIHLFRNNLGHSSAAVLGQVLPSLSELTELDLSENQMESKGCSSVCEALVSMKALKKLHLTSIGTSDLVNVASCLKHCTSIEDISLSWNNCENDVVLKLAEVLPQCSKLKRLDLEANNINTSGAMALATCLQFCPWIEVIRLWRNPIKKDDLILKDKRLNFSST.

Positions 207–537 (RVVMLSGQAG…THLTIQEFMA (331 aa)) constitute an NACHT domain. 213-220 (GQAGSGKT) provides a ligand contact to ATP. LRR repeat units follow at residues 879 to 902 (LTVL…EHLP), 904 to 925 (LDTI…VVLL), 1002 to 1025 (NLDF…LPNM), 1026 to 1048 (ASLN…LLVQ), 1103 to 1126 (CHHL…TFVQ), 1128 to 1155 (LPKL…LLSL), 1212 to 1235 (LNSV…YLIT), 1351 to 1374 (AEFL…SKGE), 1387 to 1411 (AQKH…VLGN), 1421 to 1443 (SLSL…RGLV), 1447 to 1468 (SLEE…CFAQ), 1502 to 1525 (LIEL…ELVK), 1532 to 1553 (RLRK…MLVK), 1560 to 1580 (ALQQ…AVLG), 1588 to 1609 (ELTE…SVCE), 1616 to 1637 (ALKK…ASCL), 1642 to 1662 (SIED…LKLA), and 1670 to 1691 (KLKR…ALAT).

This sequence belongs to the NLRP family.

The protein localises to the cytoplasm. In terms of biological role, probable regulator of the NF-kappa-B and type I interferon signaling pathways. May also regulate the type II interferon signaling pathway. Plays a role in homeostatic control of innate immunity and in antiviral defense mechanisms. The polypeptide is Protein NLRC5 (nlrc5) (Ictalurus punctatus (Channel catfish)).